A 471-amino-acid polypeptide reads, in one-letter code: Nuclear receptor subfamily 0 group B member 1 (471 aa).

A run of 3 repeats spans residues 1–67 (MAGE…YRCC), 68–134 (FCGE…YRCC), and 135–201 (FCGE…YRCC). Positions 1-253 (MAGEDHQWQG…QRVALKSPQV (253 aa)) are 4 X 67 AA tandem repeats. 3 short sequence motifs (LXXLL motif) span residues 13–17 (LYNML), 80–84 (LYNML), and 147–151 (LYSLL). The stretch at 202 to 253 (FCGEDHPRQSGILCNMPMSAKQTHVAPEAQPGAPWWDPSCAAQRVALKSPQV) is one 4; truncated repeat. Residues 210–470 (QSGILCNMPM…DMMLEMLCAK (261 aa)) enclose the NR LBD domain. The AF-2 motif signature appears at 462-467 (MMLEML).

This sequence belongs to the nuclear hormone receptor family. NR0 subfamily. In terms of assembly, homodimer. Interacts with NR5A1, NR5A2, NR0B2 and with COPS2. Interacts with ESRRB; represses ESRRB activity at the GATA6 promoter.

It localises to the nucleus. The protein resides in the cytoplasm. Functionally, nuclear receptor that lacks a DNA-binding domain and acts as a corepressor that inhibits the transcriptional activity of other nuclear receptors through heterodimeric interactions. Component of a cascade required for the development of the hypothalamic-pituitary-adrenal-gonadal axis. May also have a role in the development of the embryo and in the maintenance of embryonic stem cell pluripotency. This is Nuclear receptor subfamily 0 group B member 1 (NR0B1) from Sus scrofa (Pig).